The sequence spans 278 residues: Gasdermin-like protein het-Q1 (278 aa).

The protein belongs to the gasdermin family. Homooligomer; forms a homooligomeric ring-shaped pore complex when inserted in the membrane. In terms of processing, the precursor form is cleaved by het-Q2, generating the pore-forming protein (Gasdermin-like protein het-Q1, N-terminal).

The protein localises to the cell membrane. Gasdermin-like protein involved in heterokaryon incompatibility, a process that ensures that during spontaneous vegetative cell fusion, only compatible cells from the same colony survive (non-self-recognition). In P.anserina, the het-q locus exists as 2 incompatible alleles, het-Q1 (this entry) and het-Q2 (AC P0DW09). This form constitutes the precursor of the pore-forming protein: during the allorecognition process, it is cleaved by het-Q2, releasing the N-terminal moiety (Gasdermin-like protein het-Q1, N-terminal) that binds to membranes and forms pores, triggering cell death. Functionally, pore-forming protein that causes membrane permeabilization and cell death. Released upon cleavage and maturation by het-Q2 and binds to membrane inner leaflet lipids. Homooligomerizes within the membrane and forms pores of 10-15 nanometers (nm) of inner diameter, triggering cell death. The protein is Gasdermin-like protein het-Q1 of Podospora anserina (strain S / ATCC MYA-4624 / DSM 980 / FGSC 10383) (Pleurage anserina).